We begin with the raw amino-acid sequence, 307 residues long: Malate dehydrogenase (307 aa).

NAD(+) contacts are provided by residues 8-13 and D32; that span reads GAGNVG. Residues R81 and R87 each coordinate substrate. NAD(+)-binding positions include N94 and 117 to 119; that span reads VTN. Residues N119 and R150 each contribute to the substrate site. Residue H174 is the Proton acceptor of the active site.

The protein belongs to the LDH/MDH superfamily.

It carries out the reaction (S)-malate + NAD(+) = oxaloacetate + NADH + H(+). In terms of biological role, catalyzes the reversible oxidation of malate to oxaloacetate. This is Malate dehydrogenase (mdh) from Methanosarcina barkeri (strain Fusaro / DSM 804).